A 441-amino-acid polypeptide reads, in one-letter code: Arginine biosynthesis bifunctional protein ArgJ, mitochondrial (441 aa).

Positions 177, 203, 214, 303, 436, and 441 each coordinate substrate. The Nucleophile role is filled by Thr214.

Belongs to the ArgJ family. In terms of assembly, heterodimer of an alpha and a beta chain. In terms of processing, the alpha and beta chains are autoproteolytically processed from a single precursor protein within the mitochondrion.

The protein localises to the mitochondrion matrix. The catalysed reaction is N(2)-acetyl-L-ornithine + L-glutamate = N-acetyl-L-glutamate + L-ornithine. It catalyses the reaction L-glutamate + acetyl-CoA = N-acetyl-L-glutamate + CoA + H(+). It functions in the pathway amino-acid biosynthesis; L-arginine biosynthesis; L-ornithine and N-acetyl-L-glutamate from L-glutamate and N(2)-acetyl-L-ornithine (cyclic): step 1/1. Its pathway is amino-acid biosynthesis; L-arginine biosynthesis; N(2)-acetyl-L-ornithine from L-glutamate: step 1/4. Its function is as follows. Catalyzes two activities which are involved in the cyclic version of arginine biosynthesis: the synthesis of acetylglutamate from glutamate and acetyl-CoA, and of ornithine by transacetylation between acetylornithine and glutamate. This is Arginine biosynthesis bifunctional protein ArgJ, mitochondrial from Debaryomyces hansenii (strain ATCC 36239 / CBS 767 / BCRC 21394 / JCM 1990 / NBRC 0083 / IGC 2968) (Yeast).